The primary structure comprises 293 residues: Microtubule-associated protein RP/EB family member 1B (293 aa).

The Calponin-homology (CH) domain occupies 13–115 (FVGRNEILSW…FLQWLKRFCD (103 aa)). 2 disordered regions span residues 124 to 188 (ENYN…SAEV) and 262 to 293 (LGLE…ETQT). Basic and acidic residues predominate over residues 129–141 (VERRSRGGREKSV). Residues 151–166 (LQTNNMHHPPVATSNK) show a composition bias toward polar residues. Positions 180–250 (GGSNSSAEVQ…LYATDANESV (71 aa)) constitute an EB1 C-terminal domain. The segment covering 266-285 (GYEEEGKEEEEEEEEEEEEA) has biased composition (acidic residues).

The protein belongs to the MAPRE family. In terms of assembly, homodimer and heterodimer with EB1A. In terms of tissue distribution, highly expressed in guard cells of leaf stomata, pollen grains and pollen tubes. Expressed in young roots.

Its subcellular location is the cytoplasm. The protein resides in the cytoskeleton. It localises to the spindle pole. The protein localises to the phragmoplast. Its function is as follows. Binds to the plus end of microtubules and regulates the dynamics of the microtubule cytoskeleton. May be involved in anchoring microtubules to their nucleation sites and/or functioning as a reservoir for distribution to the growing end. In plants, microtubule minus ends are not necessarily severed from the nucleation site and transported to the plus end of a microtubule as part of the recycling process. May play a role in endomembrane organization during polarized growth of plant cells. In Arabidopsis thaliana (Mouse-ear cress), this protein is Microtubule-associated protein RP/EB family member 1B (EB1B).